Consider the following 149-residue polypeptide: Large ribosomal subunit protein bL9 (149 aa).

K89 bears the N6-acetyllysine mark.

It belongs to the bacterial ribosomal protein bL9 family.

In terms of biological role, binds to the 23S rRNA. This is Large ribosomal subunit protein bL9 from Shigella dysenteriae serotype 1 (strain Sd197).